The primary structure comprises 184 residues: Large ribosomal subunit protein uL22 (184 aa).

This sequence belongs to the universal ribosomal protein uL22 family. As to quaternary structure, part of the 50S ribosomal subunit.

In terms of biological role, this protein binds specifically to 23S rRNA. It makes multiple contacts with different domains of the 23S rRNA in the assembled 50S subunit and ribosome. Its function is as follows. The globular domain of the protein is located near the polypeptide exit tunnel on the outside of the subunit, while an extended beta-hairpin is found that lines the wall of the exit tunnel in the center of the 70S ribosome. The polypeptide is Large ribosomal subunit protein uL22 (Pyrobaculum calidifontis (strain DSM 21063 / JCM 11548 / VA1)).